A 507-amino-acid chain; its full sequence is Cytochrome P450 71A4 (507 aa).

A helical membrane pass occupies residues 3–23 (VPCLWYSLLILLLLFIFLLIH). C448 serves as a coordination point for heme.

Belongs to the cytochrome P450 family. Heme serves as cofactor.

It is found in the membrane. May have a role in maturation, such as during flavor formation or other metabolite production specific to aging tissues. The protein is Cytochrome P450 71A4 (CYP71A4) of Solanum melongena (Eggplant).